The chain runs to 223 residues: 7-cyano-7-deazaguanine synthase (223 aa).

ATP is bound at residue 8–18 (LSGGLDSATTL). The Zn(2+) site is built by Cys-187, Cys-197, Cys-200, and Cys-203.

The protein belongs to the QueC family. It depends on Zn(2+) as a cofactor.

It catalyses the reaction 7-carboxy-7-deazaguanine + NH4(+) + ATP = 7-cyano-7-deazaguanine + ADP + phosphate + H2O + H(+). It functions in the pathway purine metabolism; 7-cyano-7-deazaguanine biosynthesis. Functionally, catalyzes the ATP-dependent conversion of 7-carboxy-7-deazaguanine (CDG) to 7-cyano-7-deazaguanine (preQ(0)). This is 7-cyano-7-deazaguanine synthase from Methylococcus capsulatus (strain ATCC 33009 / NCIMB 11132 / Bath).